A 376-amino-acid polypeptide reads, in one-letter code: Lipoyl synthase 1, mitochondrial (376 aa).

C109, C114, C120, C140, C144, C147, and S356 together coordinate [4Fe-4S] cluster. In terms of domain architecture, Radical SAM core spans 125–345; the sequence is ETGTATATIM…QTLGMEMGFR (221 aa).

This sequence belongs to the radical SAM superfamily. Lipoyl synthase family. Requires [4Fe-4S] cluster as cofactor.

Its subcellular location is the mitochondrion. It carries out the reaction [[Fe-S] cluster scaffold protein carrying a second [4Fe-4S](2+) cluster] + N(6)-octanoyl-L-lysyl-[protein] + 2 oxidized [2Fe-2S]-[ferredoxin] + 2 S-adenosyl-L-methionine + 4 H(+) = [[Fe-S] cluster scaffold protein] + N(6)-[(R)-dihydrolipoyl]-L-lysyl-[protein] + 4 Fe(3+) + 2 hydrogen sulfide + 2 5'-deoxyadenosine + 2 L-methionine + 2 reduced [2Fe-2S]-[ferredoxin]. It functions in the pathway protein modification; protein lipoylation via endogenous pathway; protein N(6)-(lipoyl)lysine from octanoyl-[acyl-carrier-protein]: step 2/2. Functionally, catalyzes the radical-mediated insertion of two sulfur atoms into the C-6 and C-8 positions of the octanoyl moiety bound to the lipoyl domains of lipoate-dependent enzymes, thereby converting the octanoylated domains into lipoylated derivatives. The sequence is that of Lipoyl synthase 1, mitochondrial from Pisum sativum (Garden pea).